A 214-amino-acid polypeptide reads, in one-letter code: MEPLSLIYEQAYWQQGYSRVVGVDEVGRGCLAGPVVAAAVILPVDCVPLPEVRDSKQLTARQRSRLFAQIYHQAIAIGIGSASVAEIDQVNILQATYRAMARALGRVAPWDHALIDGKLTKTAPFERVTAIIGGDRHSYSIACASIIAKVRRDRFMARLARRYPQYGWERNVGYGTPEHRQALDQYGLTPWHRRSFLKSLLPSEAHLCNAIPAE.

The region spanning 18–208 (SRVVGVDEVG…SLLPSEAHLC (191 aa)) is the RNase H type-2 domain. Residues Asp-24, Glu-25, and Asp-116 each coordinate a divalent metal cation.

This sequence belongs to the RNase HII family. It depends on Mn(2+) as a cofactor. Requires Mg(2+) as cofactor.

It is found in the cytoplasm. The enzyme catalyses Endonucleolytic cleavage to 5'-phosphomonoester.. Its function is as follows. Endonuclease that specifically degrades the RNA of RNA-DNA hybrids. In Thermosynechococcus vestitus (strain NIES-2133 / IAM M-273 / BP-1), this protein is Ribonuclease HII.